A 600-amino-acid polypeptide reads, in one-letter code: Elongation factor 4 (600 aa).

Residues 5–187 (KYIRNFSIIA…AIVNKLPPPK (183 aa)) form the tr-type G domain. GTP-binding positions include 17–22 (DHGKST) and 134–137 (NKLD).

The protein belongs to the TRAFAC class translation factor GTPase superfamily. Classic translation factor GTPase family. LepA subfamily.

The protein localises to the cell inner membrane. The enzyme catalyses GTP + H2O = GDP + phosphate + H(+). Functionally, required for accurate and efficient protein synthesis under certain stress conditions. May act as a fidelity factor of the translation reaction, by catalyzing a one-codon backward translocation of tRNAs on improperly translocated ribosomes. Back-translocation proceeds from a post-translocation (POST) complex to a pre-translocation (PRE) complex, thus giving elongation factor G a second chance to translocate the tRNAs correctly. Binds to ribosomes in a GTP-dependent manner. This Rickettsia africae (strain ESF-5) protein is Elongation factor 4.